A 300-amino-acid polypeptide reads, in one-letter code: Serine/arginine-rich splicing factor SR34A (300 aa).

In terms of domain architecture, RRM 1 spans 7–82; the sequence is RSIYVGNLPG…CRLRVELAHG (76 aa). Disordered regions lie at residues 81-110 and 198-300; these read HGGR…GGGG and YESS…EGSV. A compositionally biased stretch (gly residues) spans 94 to 110; the sequence is GYGGGGSGYGGGGGGGG. An RRM 2 domain is found at 122–200; that stretch reads FRVIVRGLPS…GFIRVKKYES (79 aa). A compositionally biased stretch (basic residues) spans 203 to 239; the sequence is SRSRSPSRSRSRSRSRSRSRGRGRSHSRSRSLSRSKS. Phosphoserine is present on residues Ser-207, Ser-209, Ser-231, Ser-233, Ser-239, Ser-259, Ser-275, and Ser-285. Over residues 253–262 the composition is skewed to low complexity; sequence SRSISKSRSP. The span at 275–287 shows a compositional bias: basic residues; it reads SRSKSRSRSRSRS.

It belongs to the splicing factor SR family. SR subfamily. As to quaternary structure, component of the spliceosome.

The protein localises to the nucleus speckle. The protein resides in the nucleus. It is found in the nucleoplasm. Functionally, probably involved in intron recognition and spliceosome assembly. This is Serine/arginine-rich splicing factor SR34A (SR34A) from Arabidopsis thaliana (Mouse-ear cress).